Reading from the N-terminus, the 716-residue chain is Segment polarity protein dishevelled homolog DVL-3 (716 aa).

The 82-residue stretch at 1–82 folds into the DIX domain; sequence MGETKIIYHL…RVVSWLVSAE (82 aa). Arg-27 carries the omega-N-methylarginine modification. Phosphoserine is present on residues Ser-48 and Ser-125. Residues 85-235 form a disordered region; that stretch reads HPDPAPFCAD…VSRIERSSSF (151 aa). A compositionally biased stretch (basic and acidic residues) spans 142–156; it reads QRERPRRRDGPEHAT. Over residues 175 to 190 the composition is skewed to low complexity; sequence SSSTLMSSELETTSFF. At Ser-192 the chain carries Phosphoserine. A compositionally biased stretch (low complexity) spans 199–212; that stretch reads SRFSSSTEQSSASR. Arg-212 carries the omega-N-methylarginine modification. Positions 213–226 are enriched in basic residues; the sequence is LMRRHKRRRRKQKV. In terms of domain architecture, PDZ spans 249–321; the sequence is TVTLNMEKYN…NDDAVRVLRE (73 aa). Arg-271 carries the asymmetric dimethylarginine; by PRMT1; alternate modification. Symmetric dimethylarginine; by PRMT7; alternate occurs at positions 271 and 342. Arg-342 bears the Omega-N-methylarginine; alternate mark. Thr-346 carries the post-translational modification Phosphothreonine. The region spanning 422–496 is the DEP domain; it reads PESGLEVRDR…SEQCYYIFGD (75 aa). The interval 546 to 691 is disordered; it reads PYNPHPGFPE…PPGRDLASVP (146 aa). The span at 565–581 shows a compositional bias: low complexity; that stretch reads ASSQHSEGSRSSGSNRS. Basic and acidic residues-rich tracts occupy residues 582-595 and 604-622; these read GSDR…KAGD and ESDH…RAPS. Arg-614 bears the Symmetric dimethylarginine; by PRMT7 mark. Residues 653–682 show a composition bias toward pro residues; it reads YGPPGVPPLYGPPMLMMPPPPAAMGPPGAP. Position 697 is a phosphoserine (Ser-697). Arg-698 bears the Omega-N-methylarginine; alternate mark. Arg-698 carries the post-translational modification Dimethylated arginine; alternate. Ser-700 is modified (phosphoserine).

This sequence belongs to the DSH family. As to quaternary structure, interacts (via the PDZ domain) with the C-terminal regions of VANGL1 and VANGL2. Interacts (via the region containing both the PDZ and DEP domains) with LRRFIP2; the DIX domain may inhibit this interaction. Interacts with CYLD, CEP164 and DAB2. Interacts with DCDC2. Interacts with FOXK1 and FOXK2. Interacts with DAAM2. Ubiquitinated. Deubiquitinated by CYLD, which acts on 'Lys-63'-linked ubiquitin chains. In terms of processing, phosphorylated by CSNK1D. Post-translationally, arginine methylation may function as a switch in regulation of function in Wnt signaling.

It localises to the cytoplasm. Its function is as follows. Involved in the signal transduction pathway mediated by multiple Wnt genes. The polypeptide is Segment polarity protein dishevelled homolog DVL-3 (DVL3) (Homo sapiens (Human)).